The sequence spans 532 residues: Probable galacturonosyltransferase 14 (532 aa).

The Cytoplasmic segment spans residues Met-1–His-40. Residues Thr-41 to Leu-61 traverse the membrane as a helical; Signal-anchor for type II membrane protein segment. Over Glu-62–Glu-532 the chain is Lumenal. N-linked (GlcNAc...) asparagine glycosylation is found at Asn-305, Asn-395, Asn-444, and Asn-519.

The protein belongs to the glycosyltransferase 8 family. Expressed in roots, inflorescences, siliques, leaves and stems. Accumulates in pollen grains.

It is found in the golgi apparatus membrane. The protein operates within glycan metabolism; pectin biosynthesis. In terms of biological role, may be involved in pectin and/or xylans biosynthesis in cell walls. Together with GAUT13, required for pollen tube growth, possibly through the regulation of pectin biosynthesis and repartition in the pollen tube wall. This chain is Probable galacturonosyltransferase 14, found in Arabidopsis thaliana (Mouse-ear cress).